The primary structure comprises 103 residues: Spherulin-3A (103 aa).

The segment at 1 to 13 (MSVCKGVSGNPAK) is N-terminal arm. 2 Beta/gamma crystallin 'Greek key' domains span residues 14–55 (GEVF…KVGP) and 57–99 (TKAF…IVAT).

This sequence belongs to the beta/gamma-crystallin family.

It is found in the cytoplasm. Its function is as follows. Structural protein. This is Spherulin-3A from Physarum polycephalum (Slime mold).